The following is a 338-amino-acid chain: Glyceraldehyde-3-phosphate dehydrogenase (338 aa).

NAD(+) contacts are provided by residues 13–14 (RI), Asp-35, and Arg-80. Residues 151–153 (SCT), Thr-182, 211–212 (TG), and Arg-234 contribute to the D-glyceraldehyde 3-phosphate site. Catalysis depends on Cys-152, which acts as the Nucleophile. Asn-317 serves as a coordination point for NAD(+).

The protein belongs to the glyceraldehyde-3-phosphate dehydrogenase family. Homotetramer.

The protein localises to the cytoplasm. The enzyme catalyses D-glyceraldehyde 3-phosphate + phosphate + NAD(+) = (2R)-3-phospho-glyceroyl phosphate + NADH + H(+). Its pathway is carbohydrate degradation; glycolysis; pyruvate from D-glyceraldehyde 3-phosphate: step 1/5. This Aspergillus oryzae (strain ATCC 42149 / RIB 40) (Yellow koji mold) protein is Glyceraldehyde-3-phosphate dehydrogenase (gpdA).